The sequence spans 190 residues: Negative regulator YfiR (190 aa).

R60 is a GMP binding site. 2 disulfide bridges follow: C71-C110 and C145-C152. Residues R175 and H177 each contribute to the GMP site.

As to quaternary structure, homodimer. Interacts with TpbB/YfiN. Interacts with YfiB. The YfiB-YfiR complex is a 2:2 heterotetramer. In terms of processing, cys-71 and Cys-110 form a disulfide bond in the oxidized form but maintain their free form in the non-oxidized YfiR structure. The Cys-145-Cys-152 disulfide bond is well formed in both structures. The Cys145-Cys152 disulfide bond, but not Cys-71-Cys-110, plays an important role in maintaining the correct folding of the protein.

The protein localises to the periplasm. With respect to regulation, tpbB/YfiN repression is released through an YfiB-dependent sequestration of YfiR to the outer membrane. Binds vitamin B6 (VB6) or L-Trp at the periphery of the dimer, and both VB6 and L-Trp are able to reduce biofilm formation induced by YfiB L43P mutant. However, VB6 or L-Trp alone may have little effects in interrupting the YfiB-YfiR interaction. GMP enhances the binding affinity between YfiB and YfiR. Its function is as follows. Negatively regulates the activity of the diguanylate cyclase TpbB/YfiN, leading to decreased c-di-GMP production. Inhibits TpbB/YfiN allosterically, through a hydrophobic interaction between the C-terminus of YfiR and a conserved region of the periplasmic PAS domain of TpbB/YfiN. Under reducing conditions, may also act as an YfiB-independent sensing device that is able to activate TpbB/YfiN in response to the redox status of the periplasm. Part of the YfiB-TpbB-YfiR (or yfiBNR) system, encoding a tripartite signaling module that modulates intracellular c-di-GMP levels. The system is a key regulator of the small colony variant (SCV) phenotype, and plays an important role in biofilm formation and in vivo persistence. The c-di-GMP produced by TpbB/YfiN stimulates the production of the Pel and Psl exopolysaccharides, which promotes surface attachment, generates an SCV phenotype and confers resistance against phagocytosis. The polypeptide is Negative regulator YfiR (Pseudomonas aeruginosa (strain ATCC 15692 / DSM 22644 / CIP 104116 / JCM 14847 / LMG 12228 / 1C / PRS 101 / PAO1)).